The primary structure comprises 347 residues: Protein RecA (347 aa).

65-72 lines the ATP pocket; the sequence is GPESSGKT.

The protein belongs to the RecA family.

Its subcellular location is the cytoplasm. Can catalyze the hydrolysis of ATP in the presence of single-stranded DNA, the ATP-dependent uptake of single-stranded DNA by duplex DNA, and the ATP-dependent hybridization of homologous single-stranded DNAs. It interacts with LexA causing its activation and leading to its autocatalytic cleavage. The chain is Protein RecA from Stutzerimonas stutzeri (Pseudomonas stutzeri).